A 457-amino-acid chain; its full sequence is UDP-N-acetylmuramate--L-alanine ligase (457 aa).

112-118 (GTHGKTT) is a binding site for ATP.

The protein belongs to the MurCDEF family.

The protein resides in the cytoplasm. The enzyme catalyses UDP-N-acetyl-alpha-D-muramate + L-alanine + ATP = UDP-N-acetyl-alpha-D-muramoyl-L-alanine + ADP + phosphate + H(+). The protein operates within cell wall biogenesis; peptidoglycan biosynthesis. Functionally, cell wall formation. This is UDP-N-acetylmuramate--L-alanine ligase from Solidesulfovibrio magneticus (strain ATCC 700980 / DSM 13731 / RS-1) (Desulfovibrio magneticus).